The following is a 386-amino-acid chain: Zinc finger protein 385A (386 aa).

Residues 74 to 98 (ISCNICQIRFNSQSQAEAHYKGNRH) form a Matrin-type 1 zinc finger. Positions 90 to 193 (EAHYKGNRHA…ASLPGGSKEE (104 aa)) are disordered. Positions 103–121 (KGIEAAKTRGREPGVREPG) are enriched in basic and acidic residues. Positions 145 to 351 (NGLGPAPGSP…AGSPLSLRPA (207 aa)) are necessary for binding to ITPR1, CEBPA and p53/TP53 mRNAs. The residue at position 185 (serine 185) is a Phosphoserine. Residues 201–225 (LYCALCKVAVNSLSQLEAHNKGTKH) form a Matrin-type 2 zinc finger. Threonine 248 bears the Phosphothreonine mark. A Matrin-type 3 zinc finger spans residues 261 to 285 (FHCEICNVKVNSEVQLKQHISSRRH). A disordered region spans residues 279 to 309 (HISSRRHRDGVAGKPNPLLSRHKKSRGAGEL).

Interacts with ELAVL1; the interaction is indirect, mRNA-dependent and may regulate p53/TP53 expression. Interacts with p53/TP53; the interaction is direct and enhances p53/TP53 transactivation functions on cell-cycle arrest target genes, resulting in growth arrest. Ubiquitinated upon prolonged exposure to genotoxic stress, which leads to proteasomal degradation of ZNF385A and releases p53/TP53 from cell-cycle arrest target gene promoters. In terms of tissue distribution, expressed predominantly in the retina.

It localises to the cytoplasm. The protein resides in the nucleus. It is found in the nucleolus. The protein localises to the cell projection. Its subcellular location is the dendrite. RNA-binding protein that affects the localization and the translation of a subset of mRNA. May play a role in adipogenesis through binding to the 3'-UTR of CEBPA mRNA and regulation of its translation. Targets ITPR1 mRNA to dendrites in Purkinje cells, and may regulate its activity-dependent translation. With ELAVL1, binds the 3'-UTR of p53/TP53 mRNAs to control their nuclear export induced by CDKN2A. Hence, may regulate p53/TP53 expression and mediate in part the CDKN2A anti-proliferative activity. May also bind CCNB1 mRNA. Alternatively, may also regulate p53/TP53 activity through direct protein-protein interaction. Interacts with p53/TP53 and promotes cell-cycle arrest over apoptosis enhancing preferentially the DNA binding and transactivation of p53/TP53 on cell-cycle arrest target genes over proapoptotic target genes. May also regulate the ubiquitination and stability of CDKN1A promoting DNA damage-induced cell cycle arrest. Also plays a role in megakaryocytes differentiation. The sequence is that of Zinc finger protein 385A (ZNF385A) from Homo sapiens (Human).